A 274-amino-acid polypeptide reads, in one-letter code: Protein-export membrane protein SecF (274 aa).

The next 6 helical transmembrane spans lie at 14-34 (LLIL…ALGV), 121-141 (SVKV…FAIF), 143-163 (KPLL…DALG), 175-197 (ASFA…LSMY), 217-237 (TGIT…LLSM), and 247-267 (VVIF…AWVI).

This sequence belongs to the SecD/SecF family. SecF subfamily. In terms of assembly, part of the protein translocation apparatus. Forms a complex with SecD.

The protein resides in the cell membrane. Involved in protein export. This is Protein-export membrane protein SecF from Methanopyrus kandleri (strain AV19 / DSM 6324 / JCM 9639 / NBRC 100938).